The following is a 254-amino-acid chain: MNIKPLPDNGDLVVVKITEVKNFGANGVLEEYPGVEGYIHISEVATGWVKHIRSYLREGQRVVCKVIGVNPERKVVDLSLKRVNQHQSREKIAEWKNEQKADKLFEIVCSRLNRNPEECKEQFGRRLVELFGTLFAAFESAAQSNGEWLPEMNGDWKNVFVEIAKENITIPEVSVSGYFEVYSLASDGVERIKEVLTIPEDTGKVELEYVGAPRYRIVVKDKDYKKAEEILKKVVQIVNEKAKKLQVEVEFNKQ.

An S1 motif domain is found at 10–81 (GDLVVVKITE…ERKVVDLSLK (72 aa)).

This sequence belongs to the eIF-2-alpha family. In terms of assembly, heterotrimer composed of an alpha, a beta and a gamma chain.

In terms of biological role, eIF-2 functions in the early steps of protein synthesis by forming a ternary complex with GTP and initiator tRNA. This is Translation initiation factor 2 subunit alpha from Thermoplasma acidophilum (strain ATCC 25905 / DSM 1728 / JCM 9062 / NBRC 15155 / AMRC-C165).